The following is a 54-amino-acid chain: Ovomucoid (54 aa).

Residues 4-54 enclose the Kazal-like domain; the sequence is VDCSDYPKPVCSLDYMPLCGSDNTTYNNKCIFCNAVVDSNGTITLSHFGKC. 3 disulfides stabilise this stretch: Cys-6–Cys-36, Cys-14–Cys-33, and Cys-22–Cys-54. The N-linked (GlcNAc...) asparagine glycan is linked to Asn-43.

The protein resides in the secreted. In Haemorhous mexicanus (House finch), this protein is Ovomucoid.